The sequence spans 201 residues: Ras-related protein Rab-9B (201 aa).

GTP-binding residues include V18, G19, K20, S21, S22, D33, S34, A36, H38, and T39. S21 provides a ligand contact to Mg(2+). The Switch 1 motif lies at K31–V42. S34 carries the post-translational modification Phosphoserine. Positions 39 and 62 each coordinate Mg(2+). A Switch 2 motif is present at residues A64–R78. The GTP site is built by G65, N124, K125, A155, and K156. 2 S-geranylgeranyl cysteine lipidation sites follow: C200 and C201.

This sequence belongs to the small GTPase superfamily. Rab family. In terms of assembly, interacts (GTP-bound form) with SGSM1; the GDP-bound form has much lower affinity for SGSM1. The GTP-bound form but not the GDP-bound form interacts with HPS4 and the BLOC-3 complex (heterodimer of HPS1 and HPS4) but does not interact with HPS1 alone. Interacts (GTP-bound form) with NDE1. Requires Mg(2+) as cofactor.

It localises to the cell membrane. It is found in the cytoplasmic vesicle. The protein localises to the phagosome membrane. The catalysed reaction is GTP + H2O = GDP + phosphate + H(+). Its activity is regulated as follows. Regulated by guanine nucleotide exchange factors (GEFs) which promote the exchange of bound GDP for free GTP. Regulated by GTPase activating proteins (GAPs) which increase the GTP hydrolysis activity. Inhibited by GDP dissociation inhibitors (GDIs). The small GTPases Rab are key regulators of intracellular membrane trafficking, from the formation of transport vesicles to their fusion with membranes. Rabs cycle between an inactive GDP-bound form and an active GTP-bound form that is able to recruit to membranes different sets of downstream effectors directly responsible for vesicle formation, movement, tethering and fusion. RAB9B is involved in the transport of proteins between the endosomes and the trans Golgi network. May use NDE1/NDEL1 as an effector to interact with the dynein motor complex in order to control retrograde trafficking of RAB9-associated late endosomes to the TGN. The sequence is that of Ras-related protein Rab-9B from Mus musculus (Mouse).